Reading from the N-terminus, the 90-residue chain is Small ribosomal subunit protein bS16 (90 aa).

The protein belongs to the bacterial ribosomal protein bS16 family.

This chain is Small ribosomal subunit protein bS16, found in Streptococcus thermophilus (strain CNRZ 1066).